We begin with the raw amino-acid sequence, 796 residues long: Merozoite surface protein P92 (796 aa).

An N-terminal signal peptide occupies residues 1–26 (MFAVNLKICIFLSLVSFLLQCKNTLA). N-linked (GlcNAc...) asparagine glycans are attached at residues Asn-27, Asn-37, Asn-65, Asn-71, Asn-168, Asn-240, Asn-275, Asn-359, Asn-502, Asn-511, Asn-607, Asn-633, Asn-728, and Asn-765. The 6-Cys domain maps to 571–720 (KYEGIDLTDS…NSIKQEINKK (150 aa)). 2 disulfide bridges follow: Cys-614-Cys-691 and Cys-625-Cys-689.

As to quaternary structure, interacts with host complement factor CFH isoform 1 (via sushi 4-6 domains) and CFH isoform FHL-1 (via sushi 4-6 domains); this interaction recruits CFH onto the merozoite surface preventing complement-mediated cell lysis. The interaction does not affect CFH activity.

Its subcellular location is the cell surface. The protein resides in the cell membrane. Its function is as follows. During the asexual blood stage, recruits host complement factor H CFH to the surface of merozoites resulting in the down-regulation of the host complement alternative pathway and thus, protecting merozoites from complement-mediated lysis. The chain is Merozoite surface protein P92 from Plasmodium falciparum (isolate 3D7).